The following is a 259-amino-acid chain: Ribosomal RNA small subunit methyltransferase A (259 aa).

The S-adenosyl-L-methionine site is built by Asn-13, Leu-15, Gly-40, Glu-61, Asp-85, and Asn-103.

It belongs to the class I-like SAM-binding methyltransferase superfamily. rRNA adenine N(6)-methyltransferase family. RsmA subfamily.

It localises to the cytoplasm. It catalyses the reaction adenosine(1518)/adenosine(1519) in 16S rRNA + 4 S-adenosyl-L-methionine = N(6)-dimethyladenosine(1518)/N(6)-dimethyladenosine(1519) in 16S rRNA + 4 S-adenosyl-L-homocysteine + 4 H(+). Specifically dimethylates two adjacent adenosines (A1518 and A1519) in the loop of a conserved hairpin near the 3'-end of 16S rRNA in the 30S particle. May play a critical role in biogenesis of 30S subunits. This Neisseria gonorrhoeae (strain ATCC 700825 / FA 1090) protein is Ribosomal RNA small subunit methyltransferase A.